Consider the following 292-residue polypeptide: MQFQGAFTALVTPFRNGEVDEERYRALVEWQIEQGINGLVPCGTTGESATLTHQEHKDVIRICVEQVKGRVPVLAGAGSNNTREAVELTRYAKQAGADGALLITPYYNKPTQEGLYQHFKAIAAEVPMPFIVYNVPSRTGTNLCPETLARMKRDIPEVIGVKEATGNLIQVSEIIEYCGADFQVLSGDDFTVLPLLAVGGCGVISVSSNVVPAKMSELCRAFFEGDLATARRVHYEIASINRAMFLETNPIPVKTALSMMGRIELELRLPMVPLQPANQSRLRDILSAAGIV.

Residue Thr-45 participates in pyruvate binding. Residue Tyr-133 is the Proton donor/acceptor of the active site. Lys-162 functions as the Schiff-base intermediate with substrate in the catalytic mechanism. Pyruvate is bound at residue Ile-204.

It belongs to the DapA family. Homotetramer; dimer of dimers.

It is found in the cytoplasm. The catalysed reaction is L-aspartate 4-semialdehyde + pyruvate = (2S,4S)-4-hydroxy-2,3,4,5-tetrahydrodipicolinate + H2O + H(+). It functions in the pathway amino-acid biosynthesis; L-lysine biosynthesis via DAP pathway; (S)-tetrahydrodipicolinate from L-aspartate: step 3/4. In terms of biological role, catalyzes the condensation of (S)-aspartate-beta-semialdehyde [(S)-ASA] and pyruvate to 4-hydroxy-tetrahydrodipicolinate (HTPA). In Nitratidesulfovibrio vulgaris (strain DSM 19637 / Miyazaki F) (Desulfovibrio vulgaris), this protein is 4-hydroxy-tetrahydrodipicolinate synthase.